A 43-amino-acid polypeptide reads, in one-letter code: Potassium channel toxin gamma-KTx 4.4 (43 aa).

Intrachain disulfides connect C5/C23, C11/C34, C20/C39, and C24/C41.

It belongs to the ergtoxin family. Gamma-KTx 4 subfamily. As to expression, expressed by the venom gland.

It localises to the secreted. Reversibly blocks Kv11/ERG potassium channels. The polypeptide is Potassium channel toxin gamma-KTx 4.4 (Centruroides exilicauda (Bark scorpion)).